A 165-amino-acid chain; its full sequence is Adenosine 5'-monophosphoramidase HINT3 (165 aa).

Residues 1–23 (MAEKQAGLVGEPDPEGSSPGTSE) form a disordered region. At Ala-2 the chain carries N-acetylalanine. The HIT domain occupies 32 to 143 (VFCRVAAGQE…PVKEFGFLSK (112 aa)). AMP contacts are provided by residues 59 to 60 (DI) and 128 to 130 (HLH). Residues 126–130 (HLHLH) carry the Histidine triad motif motif. The active-site Tele-AMP-histidine intermediate is His-128.

This sequence belongs to the HINT family. In terms of assembly, forms dimers to octamers and even larger oligomer. Interacts with CALM1.

Its subcellular location is the cytoplasm. The protein resides in the nucleus. It catalyses the reaction adenosine 5'-phosphoramidate + H2O = AMP + NH4(+). Exhibits adenosine 5'-monophosphoramidase activity, hydrolyzing purine nucleotide phosphoramidates with a single phosphate group such as adenosine 5'monophosphoramidate (AMP-NH2) to yield AMP and NH2. Hydrolyzes lysyl-AMP (AMP-N-epsilon-(N-alpha-acetyl lysine methyl ester)) generated by lysine tRNA ligase. The polypeptide is Adenosine 5'-monophosphoramidase HINT3 (Hint3) (Mus musculus (Mouse)).